The following is a 1360-amino-acid chain: Ubiquitin carboxyl-terminal hydrolase 19 (1360 aa).

Positions 1 to 46 (MSAGASATGPRRGPPGLEEATSKKKQKDRANLESKDGDARRVSLPR) are disordered. The Cytoplasmic segment spans residues 1 to 1333 (MSAGASATGP…TTPDEGCLRY (1333 aa)). Residues 28 to 46 (DRANLESKDGDARRVSLPR) are compositionally biased toward basic and acidic residues. A CS 1 domain is found at 51 to 140 (KDELLLDWRQ…VPLLTWPSLL (90 aa)). The segment at 163–239 (PIALEPGSEP…APSFLSDSAT (77 aa)) is disordered. Positions 170-181 (SEPRRAKQEARN) are enriched in basic and acidic residues. Residues 189–199 (GEVGSGAGPGT) show a composition bias toward gly residues. Ser220 is subject to Phosphoserine. The region spanning 322-424 (LAFVKNDSYE…RQSQRWGGLE (103 aa)) is the CS 2 domain. Positions 432–482 (VGGAKVAVPTGPTPLDSTPPGGGPHPLTGQEEARAVEKEKPKARSEDSGLD) are disordered. A compositionally biased stretch (basic and acidic residues) spans 462 to 478 (EEARAVEKEKPKARSED). The USP domain maps to 539-1256 (TGLVNLGNTC…YAYVLFYRRR (718 aa)). Cys548 acts as the Nucleophile in catalysis. Residues Cys833, Cys836, Cys850, Cys853, Cys859, Cys863, His871, and Cys875 each coordinate Zn(2+). The segment at 833–875 (CAACQRKQQSEEEKLKRCTRCYRVGYCNQFCQKTHWPDHKGLC) adopts an MYND-type zinc-finger fold. The segment at 965–988 (DTGAHRVWPPADRGPVPSTSGLSS) is disordered. Catalysis depends on His1207, which acts as the Proton acceptor. The segment covering 1259–1274 (PVERPPRASHSEHHPD) has biased composition (basic and acidic residues). The interval 1259-1281 (PVERPPRASHSEHHPDLGPAAEA) is disordered. Residues 1334–1354 (FVLGTVAALVALVLNVFYPLV) traverse the membrane as a helical segment. Residues 1355 to 1360 (SQSRWR) are Lumenal-facing.

In terms of assembly, interacts with RNF123. Interacts with BIRC2/c-IAP1, BIRC3/c-IAP2 and XIAP/BIRC4. Interacts with HIF1A (via N-terminus).

It is found in the endoplasmic reticulum membrane. The catalysed reaction is Thiol-dependent hydrolysis of ester, thioester, amide, peptide and isopeptide bonds formed by the C-terminal Gly of ubiquitin (a 76-residue protein attached to proteins as an intracellular targeting signal).. Its function is as follows. Deubiquitinating enzyme that regulates the degradation of various proteins by removing ubiquitin moieties, thereby preventing their proteasomal degradation. Stabilizes RNF123, which promotes CDKN1B degradation and contributes to cell proliferation. Decreases the levels of ubiquitinated proteins during skeletal muscle formation and acts to repress myogenesis. Modulates transcription of major myofibrillar proteins. Also involved in turnover of endoplasmic-reticulum-associated degradation (ERAD) substrates. Mechanistically, deubiquitinates and thereby stabilizes several E3 ligases involved in the ERAD pathway including SYVN1 or MARCHF6. Regulates the stability of other E3 ligases including BIRC2/c-IAP1 and BIRC3/c-IAP2 by preventing their ubiquitination. Required for cells to mount an appropriate response to hypoxia by rescuing HIF1A from degradation in a non-catalytic manner and by mediating the deubiquitination of FUNDC1. Attenuates mitochondrial damage and ferroptosis by targeting and stabilizing NADPH oxidase 4/NOX4. Negatively regulates TNF-alpha- and IL-1beta-triggered NF-kappa-B activation by hydrolyzing 'Lys-27'- and 'Lys-63'-linked polyubiquitin chains from MAP3K7. Modulates also the protein level and aggregation of polyQ-expanded huntingtin/HTT through HSP90AA1. This is Ubiquitin carboxyl-terminal hydrolase 19 (Usp19) from Mus musculus (Mouse).